The sequence spans 273 residues: MVSTSNGSDPLTIGGRLFSCRLLTGTGKYPSINSMQSSIERSACEMVTVAVRRVQTGAAGHTGLMEAIDWSRIWMLPNTAGCTNAEEAIRVARLGRELAKLAGQEDNNFIKLEVIPDSRHLLPDPIGTLQAAEALVKEGFTVLPYINADPLLAQRLEEVGCATVMPLGSPIGSGQGLNNAANIALIIENATVPVVVDAGIGVPSEAAQAMEMGADAVLVNSAIALAGDPPSMAEAMGKAVIAGRMAYSSGRLPRRGQASASSPTTGLISGKDK.

Lysine 111 functions as the Schiff-base intermediate with DXP in the catalytic mechanism. 1-deoxy-D-xylulose 5-phosphate contacts are provided by residues glycine 172, 198-199 (AG), and 220-221 (NS). Residues 251–273 (RLPRRGQASASSPTTGLISGKDK) form a disordered region. Residues 258-267 (ASASSPTTGL) are compositionally biased toward polar residues.

The protein belongs to the ThiG family. In terms of assembly, homotetramer. Forms heterodimers with either ThiH or ThiS.

Its subcellular location is the cytoplasm. It carries out the reaction [ThiS sulfur-carrier protein]-C-terminal-Gly-aminoethanethioate + 2-iminoacetate + 1-deoxy-D-xylulose 5-phosphate = [ThiS sulfur-carrier protein]-C-terminal Gly-Gly + 2-[(2R,5Z)-2-carboxy-4-methylthiazol-5(2H)-ylidene]ethyl phosphate + 2 H2O + H(+). Its pathway is cofactor biosynthesis; thiamine diphosphate biosynthesis. Catalyzes the rearrangement of 1-deoxy-D-xylulose 5-phosphate (DXP) to produce the thiazole phosphate moiety of thiamine. Sulfur is provided by the thiocarboxylate moiety of the carrier protein ThiS. In vitro, sulfur can be provided by H(2)S. This Synechococcus sp. (strain CC9902) protein is Thiazole synthase.